A 273-amino-acid chain; its full sequence is HMP-PP phosphatase (273 aa).

Residue aspartate 8 is the Nucleophile of the active site. Mg(2+) contacts are provided by aspartate 8, aspartate 10, and aspartate 212.

The protein belongs to the HAD-like hydrolase superfamily. Cof family. Requires Mg(2+) as cofactor.

It carries out the reaction 4-amino-2-methyl-5-(diphosphooxymethyl)pyrimidine + H2O = 4-amino-2-methyl-5-(phosphooxymethyl)pyrimidine + phosphate + H(+). Functionally, catalyzes the hydrolysis of 4-amino-2-methyl-5-hydroxymethylpyrimidine pyrophosphate (HMP-PP) to 4-amino-2-methyl-5-hydroxymethylpyrimidine phosphate (HMP-P). The protein is HMP-PP phosphatase of Yersinia pseudotuberculosis serotype I (strain IP32953).